Consider the following 140-residue polypeptide: Histone H2B (140 aa).

A compositionally biased stretch (basic and acidic residues) spans 1 to 10 (MPPKAAEKKP). Positions 1 to 48 (MPPKAAEKKPSTGGKAPAGKAPAEKKEAGKKTAAAASGDKKKRGKTRK) are disordered. An N6-acetyllysine; alternate mark is found at lysine 8 and lysine 9. Residues lysine 8 and lysine 9 each participate in a glycyl lysine isopeptide (Lys-Gly) (interchain with G-Cter in SUMO); alternate cross-link. Over residues 11–21 (STGGKAPAGKA) the composition is skewed to low complexity. The residue at position 15 (lysine 15) is an N6-acetyllysine. At lysine 25 the chain carries N6-acetyllysine; alternate. Residue lysine 25 forms a Glycyl lysine isopeptide (Lys-Gly) (interchain with G-Cter in SUMO); alternate linkage. Lysine 26 participates in a covalent cross-link: Glycyl lysine isopeptide (Lys-Gly) (interchain with G-Cter in SUMO). A Glycyl lysine isopeptide (Lys-Gly) (interchain with G-Cter in ubiquitin) cross-link involves residue lysine 134.

Belongs to the histone H2B family. The nucleosome is a histone octamer containing two molecules each of H2A, H2B, H3 and H4 assembled in one H3-H4 heterotetramer and two H2A-H2B heterodimers. The octamer wraps approximately 147 bp of DNA. Monoubiquitinated by the ubc2-bre1 complex to form H2BK123ub1. H2BK123ub1 gives a specific tag for epigenetic transcriptional activation and is also prerequisite for H3K4me and H3K79me formation. H2BK123ub1 also modulates the formation of double-strand breaks during meiosis and is a prerequisite for DNA-damage checkpoint activation. Post-translationally, acetylated by gcn5 to form H2BK11ac and H2BK16ac. H2BK16ac can also be formed by esa1. Acetylation of N-terminal lysines and particularly formation of H2BK11acK16ac has a positive effect on transcription. In terms of processing, sumoylation to form H2BK6su or H2BK7su, and probably also H2BK16su or H2BK17su, occurs preferentially near the telomeres and represses gene transcription.

It is found in the nucleus. The protein localises to the chromosome. Core component of nucleosome. Nucleosomes wrap and compact DNA into chromatin, limiting DNA accessibility to the cellular machineries which require DNA as a template. Histones thereby play a central role in transcription regulation, DNA repair, DNA replication and chromosomal stability. DNA accessibility is regulated via a complex set of post-translational modifications of histones, also called histone code, and nucleosome remodeling. The polypeptide is Histone H2B (htb1) (Aspergillus clavatus (strain ATCC 1007 / CBS 513.65 / DSM 816 / NCTC 3887 / NRRL 1 / QM 1276 / 107)).